The sequence spans 613 residues: Pentatricopeptide repeat-containing protein At2g02750 (613 aa).

PPR repeat units lie at residues 30-64, 65-99, 101-126, 128-162, 163-193, 194-228, 230-264, 265-295, 297-331, 332-366, 367-401, 402-432, 435-469, 470-500, and 506-539; these read NKFTFPPLLKSCAKLGDVVQGRILHAQVVKTGFFV, DVFTATALVSMYMKVKQVTDALKVLDEMPERGIAS, NAAVSGLLENGFCRDAFRMFGDARVS, SGMNSVTVASVLGGCGDIEGGMQLHCLAMKSGFEM, EVYVGTSLVSMYSRCGEWVLAARMFEKVPHK, SVVTYNAFISGLMENGVMNLVPSVFNLMRKFSSEE, NDVTFVNAITACASLLNLQYGRQLHGLVMKKEFQF, ETMVGTALIDMYSKCRCWKSAYIVFTELKDT, NLISWNSVISGMMINGQHETAVELFEKLDSEGLKP, DSATWNSLISGFSQLGKVIEAFKFFERMLSVVMVP, SLKCLTSLLSACSDIWTLKNGKEIHGHVIKAAAER, DIFVLTSLIDMYMKCGLSSWARRIFDRFEPK, DPVFWNVMISGYGKHGECESAIEIFELLREEKVEP, SLATFTAVLSACSHCGNVEKGSQIFRLMQEE, and STEHIGCMIDLLGRSGRLREAKEVIDQMSEPSSS. Residues 540 to 613 form a type E motif; degenerate region; it reads VYSSLLGSCR…VKLPGLSLSG (74 aa).

The protein belongs to the PPR family. PCMP-E subfamily.

The sequence is that of Pentatricopeptide repeat-containing protein At2g02750 (PCMP-E22) from Arabidopsis thaliana (Mouse-ear cress).